The sequence spans 645 residues: 1-deoxy-D-xylulose-5-phosphate synthase 2 (645 aa).

Thiamine diphosphate-binding positions include H79 and 120-122 (GHS). Position 151 (D151) interacts with Mg(2+). Residues 152–153 (GS), N180, Y291, and E373 contribute to the thiamine diphosphate site. Residue N180 coordinates Mg(2+).

It belongs to the transketolase family. DXPS subfamily. In terms of assembly, homodimer. Mg(2+) is required as a cofactor. Requires thiamine diphosphate as cofactor.

The catalysed reaction is D-glyceraldehyde 3-phosphate + pyruvate + H(+) = 1-deoxy-D-xylulose 5-phosphate + CO2. The protein operates within metabolic intermediate biosynthesis; 1-deoxy-D-xylulose 5-phosphate biosynthesis; 1-deoxy-D-xylulose 5-phosphate from D-glyceraldehyde 3-phosphate and pyruvate: step 1/1. Its function is as follows. Catalyzes the acyloin condensation reaction between C atoms 2 and 3 of pyruvate and glyceraldehyde 3-phosphate to yield 1-deoxy-D-xylulose-5-phosphate (DXP). The polypeptide is 1-deoxy-D-xylulose-5-phosphate synthase 2 (Rhodospirillum rubrum (strain ATCC 11170 / ATH 1.1.1 / DSM 467 / LMG 4362 / NCIMB 8255 / S1)).